The sequence spans 393 residues: Branched-chain amino acid aminotransferase 1, mitochondrial (393 aa).

A mitochondrion-targeting transit peptide spans 1–34; that stretch reads MIHRGLWLHNLVQSYRVGSSSSSSTLFKLVYRYN. Arginine 138 serves as a coordination point for pyridoxal 5'-phosphate. Residue lysine 240 is the Proton acceptor of the active site. The residue at position 240 (lysine 240) is an N6-(pyridoxal phosphate)lysine. Glutamate 276 is a pyridoxal 5'-phosphate binding site.

It belongs to the class-IV pyridoxal-phosphate-dependent aminotransferase family. Pyridoxal 5'-phosphate serves as cofactor. Expressed specifically in lupulin glands.

The protein resides in the mitochondrion. The catalysed reaction is L-isoleucine + 2-oxoglutarate = (S)-3-methyl-2-oxopentanoate + L-glutamate. It carries out the reaction L-leucine + 2-oxoglutarate = 4-methyl-2-oxopentanoate + L-glutamate. It catalyses the reaction L-valine + 2-oxoglutarate = 3-methyl-2-oxobutanoate + L-glutamate. The protein operates within amino-acid biosynthesis; L-isoleucine biosynthesis; L-isoleucine from 2-oxobutanoate: step 4/4. It functions in the pathway amino-acid biosynthesis; L-leucine biosynthesis; L-leucine from 3-methyl-2-oxobutanoate: step 4/4. Its pathway is amino-acid biosynthesis; L-valine biosynthesis; L-valine from pyruvate: step 4/4. Its function is as follows. Converts 2-oxo acids to branched-chain amino acids (BCAA). Shows no kinetic preferences corresponding to anabolic or catabolic functions, but likely involved in BCAA catabolism. This Humulus lupulus (European hop) protein is Branched-chain amino acid aminotransferase 1, mitochondrial.